A 46-amino-acid polypeptide reads, in one-letter code: Thymosin beta-a (46 aa).

Polar residues predominate over residues 21 to 30 (TNTAEKNTLP). Residues 21–46 (TNTAEKNTLPTKEDIDQEKKAAEGGK) are disordered. A compositionally biased stretch (basic and acidic residues) spans 31–46 (TKEDIDQEKKAAEGGK).

Belongs to the thymosin beta family.

It localises to the cytoplasm. The protein localises to the cytoskeleton. In terms of biological role, plays an important role in the organization of the cytoskeleton. Binds to and sequesters actin monomers (G actin) and therefore inhibits actin polymerization. This is Thymosin beta-a from Cyprinus carpio (Common carp).